We begin with the raw amino-acid sequence, 255 residues long: Ras-like protein family member 12 (255 aa).

GTP-binding positions include 30–37 (GAMGSGKS), 77–81 (DTADQ), and 137–140 (NKVD).

It belongs to the small GTPase superfamily. Ras family.

The enzyme catalyses GTP + H2O = GDP + phosphate + H(+). This chain is Ras-like protein family member 12 (RASL12), found in Danio rerio (Zebrafish).